The chain runs to 388 residues: S-adenosylmethionine synthase (388 aa).

His16 serves as a coordination point for ATP. Mg(2+) is bound at residue Asp18. Residue Glu44 coordinates K(+). Positions 57 and 100 each coordinate L-methionine. Residues 100-110 (QSPDIAQGVNE) form a flexible loop region. Residues 167–169 (DGK), 233–234 (RF), Asp242, 248–249 (RK), and Lys269 contribute to the ATP site. Residue Asp242 participates in L-methionine binding. Residue Lys273 participates in L-methionine binding.

This sequence belongs to the AdoMet synthase family. As to quaternary structure, homotetramer; dimer of dimers. It depends on Mg(2+) as a cofactor. K(+) is required as a cofactor.

It is found in the cytoplasm. It catalyses the reaction L-methionine + ATP + H2O = S-adenosyl-L-methionine + phosphate + diphosphate. The protein operates within amino-acid biosynthesis; S-adenosyl-L-methionine biosynthesis; S-adenosyl-L-methionine from L-methionine: step 1/1. In terms of biological role, catalyzes the formation of S-adenosylmethionine (AdoMet) from methionine and ATP. The overall synthetic reaction is composed of two sequential steps, AdoMet formation and the subsequent tripolyphosphate hydrolysis which occurs prior to release of AdoMet from the enzyme. The polypeptide is S-adenosylmethionine synthase (Desulfosudis oleivorans (strain DSM 6200 / JCM 39069 / Hxd3) (Desulfococcus oleovorans)).